A 249-amino-acid chain; its full sequence is 5'-nucleotidase SurE (249 aa).

The a divalent metal cation site is built by D8, D9, S39, and N91.

It belongs to the SurE nucleotidase family. It depends on a divalent metal cation as a cofactor.

It is found in the cytoplasm. It catalyses the reaction a ribonucleoside 5'-phosphate + H2O = a ribonucleoside + phosphate. Its function is as follows. Nucleotidase that shows phosphatase activity on nucleoside 5'-monophosphates. The chain is 5'-nucleotidase SurE from Ectopseudomonas mendocina (strain ymp) (Pseudomonas mendocina).